The chain runs to 344 residues: Methylthioribose-1-phosphate isomerase (344 aa).

Substrate is bound by residues arginine 46 to alanine 48, arginine 89, and glutamine 196. The Proton donor role is filled by aspartate 237. Asparagine 247–lysine 248 is a binding site for substrate.

This sequence belongs to the eIF-2B alpha/beta/delta subunits family. MtnA subfamily.

The enzyme catalyses 5-(methylsulfanyl)-alpha-D-ribose 1-phosphate = 5-(methylsulfanyl)-D-ribulose 1-phosphate. Its pathway is amino-acid biosynthesis; L-methionine biosynthesis via salvage pathway; L-methionine from S-methyl-5-thio-alpha-D-ribose 1-phosphate: step 1/6. Functionally, catalyzes the interconversion of methylthioribose-1-phosphate (MTR-1-P) into methylthioribulose-1-phosphate (MTRu-1-P). The chain is Methylthioribose-1-phosphate isomerase from Syntrophotalea carbinolica (strain DSM 2380 / NBRC 103641 / GraBd1) (Pelobacter carbinolicus).